We begin with the raw amino-acid sequence, 152 residues long: SsrA-binding protein (152 aa).

Belongs to the SmpB family.

It localises to the cytoplasm. Its function is as follows. Required for rescue of stalled ribosomes mediated by trans-translation. Binds to transfer-messenger RNA (tmRNA), required for stable association of tmRNA with ribosomes. tmRNA and SmpB together mimic tRNA shape, replacing the anticodon stem-loop with SmpB. tmRNA is encoded by the ssrA gene; the 2 termini fold to resemble tRNA(Ala) and it encodes a 'tag peptide', a short internal open reading frame. During trans-translation Ala-aminoacylated tmRNA acts like a tRNA, entering the A-site of stalled ribosomes, displacing the stalled mRNA. The ribosome then switches to translate the ORF on the tmRNA; the nascent peptide is terminated with the 'tag peptide' encoded by the tmRNA and targeted for degradation. The ribosome is freed to recommence translation, which seems to be the essential function of trans-translation. This is SsrA-binding protein from Rickettsia felis (strain ATCC VR-1525 / URRWXCal2) (Rickettsia azadi).